The following is a 100-amino-acid chain: Urease subunit gamma (100 aa).

This sequence belongs to the urease gamma subunit family. As to quaternary structure, heterotrimer of UreA (gamma), UreB (beta) and UreC (alpha) subunits. Three heterotrimers associate to form the active enzyme.

The protein localises to the cytoplasm. The enzyme catalyses urea + 2 H2O + H(+) = hydrogencarbonate + 2 NH4(+). The protein operates within nitrogen metabolism; urea degradation; CO(2) and NH(3) from urea (urease route): step 1/1. This is Urease subunit gamma from Arthrobacter sp. (strain FB24).